A 700-amino-acid polypeptide reads, in one-letter code: Choline transporter-like protein 5-B (700 aa).

Topologically, residues 1–4 are cytoplasmic; the sequence is GCTD. Residues 5 to 25 form a helical membrane-spanning segment; that stretch reads VLCCVIFVIVILGYIVLGTVA. Topologically, residues 26–209 are extracellular; sequence WMHGDPRKVV…KIFEDYASSW (184 aa). 2 N-linked (GlcNAc...) asparagine glycosylation sites follow: asparagine 157 and asparagine 164. A helical transmembrane segment spans residues 210 to 230; the sequence is FWILIGLVISMLVSLVFILLL. Residues 231–233 are Cytoplasmic-facing; the sequence is RFT. The helical transmembrane segment at 234-254 threads the bilayer; sequence AGVLFWLVIFGVIAAVGYGIW. Residues 255–292 are Extracellular-facing; the sequence is HCYWEYSSLKGKPDSDVTISDIGFQTDFRVYLQLSQTW. A helical transmembrane segment spans residues 293-313; it reads LIFMTSLAVIEAIIILVLIFL. At 314 to 341 the chain is on the cytoplasmic side; it reads RNRVRIAIALLKEGSKAIGCIMSTLFYP. Residues 342–362 traverse the membrane as a helical segment; it reads IITFLLLALCIAYWAVTAVFL. The Extracellular portion of the chain corresponds to 363-432; that stretch reads ASSGEAVYKV…LQLCNLLVFL (70 aa). Residues asparagine 383 and asparagine 395 are each glycosylated (N-linked (GlcNAc...) asparagine). Residues 433–455 traverse the membrane as a helical segment; it reads WLVNFTIALGQCTLAGAFAAYYW. Residues 456–482 are Cytoplasmic-facing; that stretch reads ALRKPADIPPCPLASSFGRALRYHTGS. The helical transmembrane segment at 483-503 threads the bilayer; it reads LAFGALILSIVQFIRIILEYL. Residues 504–541 lie on the Extracellular side of the membrane; it reads DHKLKGAHNAFTRFLLCCLKCCFWCLEHFIKFMNRNAY. A helical membrane pass occupies residues 542–562; sequence IMISIYGKNFCTSARDAFFLL. The Cytoplasmic segment spans residues 563-577; it reads MRNVMRVAVLDKVTD. A helical membrane pass occupies residues 578–598; sequence FLLFLGKLLISGSVGVLAFFF. Over 599–616 the chain is Extracellular; sequence FTRQIPVIQEEVPSLNYY. A helical membrane pass occupies residues 617 to 637; sequence WVPLLTVIFGSYMIAHGFFNV. The Cytoplasmic portion of the chain corresponds to 638 to 687; sequence YAMCVDTLFLCFLLDLEKNDGSATRPYYMCSSLRAILNKKNQKRPKETKR. Residues 676–700 form a disordered region; sequence KKNQKRPKETKRGRKQKKEQPKSRH. Positions 677–692 are enriched in basic residues; sequence KNQKRPKETKRGRKQK.

Belongs to the CTL (choline transporter-like) family.

The protein resides in the cell membrane. The catalysed reaction is choline(out) + n H(+)(in) = choline(in) + n H(+)(out). Its function is as follows. Choline/H+ antiporter. The protein is Choline transporter-like protein 5-B (slc44a5b) of Danio rerio (Zebrafish).